Here is a 74-residue protein sequence, read N- to C-terminus: MGSCCGRFCDAKNKKEDVEDGREGCCDYKNLNDLDESEARVEFGPLYMINEEKSDINTLDIKRRYRHTIESVYF.

The protein belongs to the orthopoxvirus OPG051 family.

This Monkeypox virus protein is Protein OPG051 (OPG051).